The primary structure comprises 118 residues: Small ribosomal subunit protein uS13 (118 aa).

The interval 91–118 is disordered; that stretch reads HRRGLPVRGQRTRTNARTRKGPRRPIKK.

This sequence belongs to the universal ribosomal protein uS13 family. Part of the 30S ribosomal subunit. Forms a loose heterodimer with protein S19. Forms two bridges to the 50S subunit in the 70S ribosome.

Its function is as follows. Located at the top of the head of the 30S subunit, it contacts several helices of the 16S rRNA. In the 70S ribosome it contacts the 23S rRNA (bridge B1a) and protein L5 of the 50S subunit (bridge B1b), connecting the 2 subunits; these bridges are implicated in subunit movement. Contacts the tRNAs in the A and P-sites. The chain is Small ribosomal subunit protein uS13 from Methylococcus capsulatus (strain ATCC 33009 / NCIMB 11132 / Bath).